A 171-amino-acid polypeptide reads, in one-letter code: Shikimate kinase (171 aa).

14–19 (GAGKST) provides a ligand contact to ATP. Serine 18 contacts Mg(2+). 3 residues coordinate substrate: aspartate 36, arginine 60, and glycine 82. Residue arginine 120 participates in ATP binding. Arginine 139 is a binding site for substrate. An ATP-binding site is contributed by glutamine 156.

It belongs to the shikimate kinase family. In terms of assembly, monomer. Mg(2+) is required as a cofactor.

It localises to the cytoplasm. It catalyses the reaction shikimate + ATP = 3-phosphoshikimate + ADP + H(+). Its pathway is metabolic intermediate biosynthesis; chorismate biosynthesis; chorismate from D-erythrose 4-phosphate and phosphoenolpyruvate: step 5/7. Catalyzes the specific phosphorylation of the 3-hydroxyl group of shikimic acid using ATP as a cosubstrate. This is Shikimate kinase from Shewanella amazonensis (strain ATCC BAA-1098 / SB2B).